A 290-amino-acid polypeptide reads, in one-letter code: 4-diphosphocytidyl-2-C-methyl-D-erythritol kinase (290 aa).

The active site involves Lys11. An ATP-binding site is contributed by 97–107; that stretch reads PVAAGIGGGSS. Residue Asp139 is part of the active site.

It belongs to the GHMP kinase family. IspE subfamily.

It carries out the reaction 4-CDP-2-C-methyl-D-erythritol + ATP = 4-CDP-2-C-methyl-D-erythritol 2-phosphate + ADP + H(+). It participates in isoprenoid biosynthesis; isopentenyl diphosphate biosynthesis via DXP pathway; isopentenyl diphosphate from 1-deoxy-D-xylulose 5-phosphate: step 3/6. Functionally, catalyzes the phosphorylation of the position 2 hydroxy group of 4-diphosphocytidyl-2C-methyl-D-erythritol. This Methylobacterium radiotolerans (strain ATCC 27329 / DSM 1819 / JCM 2831 / NBRC 15690 / NCIMB 10815 / 0-1) protein is 4-diphosphocytidyl-2-C-methyl-D-erythritol kinase.